A 435-amino-acid chain; its full sequence is Succinate--CoA ligase [ADP-forming] subunit beta, mitochondrial (435 aa).

Residues 1-20 (MIGRISQPLLNTSQKFMAPA) constitute a mitochondrion transit peptide. An ATP-grasp domain is found at 32-259 (MKILQNYEIK…SNAEFRQAKL (228 aa)). Residues K69 and 76-78 (GRG) contribute to the ATP site. N229 and D243 together coordinate Mg(2+). Residues N294 and 352–354 (GIM) each bind substrate.

This sequence belongs to the succinate/malate CoA ligase beta subunit family. ATP-specific subunit beta subfamily. As to quaternary structure, heterodimer of an alpha and a beta subunit. The beta subunit determines specificity for ATP. Mg(2+) is required as a cofactor.

The protein localises to the mitochondrion. The catalysed reaction is succinate + ATP + CoA = succinyl-CoA + ADP + phosphate. It participates in carbohydrate metabolism; tricarboxylic acid cycle; succinate from succinyl-CoA (ligase route): step 1/1. Functionally, ATP-specific succinyl-CoA synthetase functions in the citric acid cycle (TCA), coupling the hydrolysis of succinyl-CoA to the synthesis of ATP and thus represents the only step of substrate-level phosphorylation in the TCA. The beta subunit provides nucleotide specificity of the enzyme and binds the substrate succinate, while the binding sites for coenzyme A and phosphate are found in the alpha subunit. This is Succinate--CoA ligase [ADP-forming] subunit beta, mitochondrial from Caenorhabditis elegans.